The sequence spans 343 residues: N-acetyl-gamma-glutamyl-phosphate reductase (343 aa).

Cysteine 146 is an active-site residue.

It belongs to the NAGSA dehydrogenase family. Type 1 subfamily.

It localises to the cytoplasm. It carries out the reaction N-acetyl-L-glutamate 5-semialdehyde + phosphate + NADP(+) = N-acetyl-L-glutamyl 5-phosphate + NADPH + H(+). It functions in the pathway amino-acid biosynthesis; L-arginine biosynthesis; N(2)-acetyl-L-ornithine from L-glutamate: step 3/4. Its function is as follows. Catalyzes the NADPH-dependent reduction of N-acetyl-5-glutamyl phosphate to yield N-acetyl-L-glutamate 5-semialdehyde. This chain is N-acetyl-gamma-glutamyl-phosphate reductase, found in Pseudarthrobacter chlorophenolicus (strain ATCC 700700 / DSM 12829 / CIP 107037 / JCM 12360 / KCTC 9906 / NCIMB 13794 / A6) (Arthrobacter chlorophenolicus).